We begin with the raw amino-acid sequence, 488 residues long: Glutamate--tRNA ligase (488 aa).

The short motif at P16–T26 is the 'HIGH' region element. The 'KMSKS' region motif lies at K257–R261. K260 provides a ligand contact to ATP.

Belongs to the class-I aminoacyl-tRNA synthetase family. Glutamate--tRNA ligase type 1 subfamily. Monomer.

It is found in the cytoplasm. The catalysed reaction is tRNA(Glu) + L-glutamate + ATP = L-glutamyl-tRNA(Glu) + AMP + diphosphate. Its function is as follows. Catalyzes the attachment of glutamate to tRNA(Glu) in a two-step reaction: glutamate is first activated by ATP to form Glu-AMP and then transferred to the acceptor end of tRNA(Glu). The polypeptide is Glutamate--tRNA ligase (Rhizobium johnstonii (strain DSM 114642 / LMG 32736 / 3841) (Rhizobium leguminosarum bv. viciae)).